The chain runs to 345 residues: Anthranilate phosphoribosyltransferase (345 aa).

Residues glycine 80, 83–84 (GD), threonine 88, 90–93 (NIST), 108–116 (KHGNRSVSS), and serine 120 each bind 5-phospho-alpha-D-ribose 1-diphosphate. Anthranilate is bound at residue glycine 80. Serine 92 is a Mg(2+) binding site. Residue asparagine 111 coordinates anthranilate. Position 166 (arginine 166) interacts with anthranilate. 2 residues coordinate Mg(2+): aspartate 225 and glutamate 226.

This sequence belongs to the anthranilate phosphoribosyltransferase family. Homodimer. Requires Mg(2+) as cofactor.

It carries out the reaction N-(5-phospho-beta-D-ribosyl)anthranilate + diphosphate = 5-phospho-alpha-D-ribose 1-diphosphate + anthranilate. The protein operates within amino-acid biosynthesis; L-tryptophan biosynthesis; L-tryptophan from chorismate: step 2/5. In terms of biological role, catalyzes the transfer of the phosphoribosyl group of 5-phosphorylribose-1-pyrophosphate (PRPP) to anthranilate to yield N-(5'-phosphoribosyl)-anthranilate (PRA). This chain is Anthranilate phosphoribosyltransferase, found in Pelotomaculum thermopropionicum (strain DSM 13744 / JCM 10971 / SI).